Consider the following 304-residue polypeptide: tRNA dimethylallyltransferase (304 aa).

13–20 (GPTAAGKT) lines the ATP pocket. 15–20 (TAAGKT) is a binding site for substrate. The tract at residues 38–41 (DSRQ) is interaction with substrate tRNA.

This sequence belongs to the IPP transferase family. In terms of assembly, monomer. It depends on Mg(2+) as a cofactor.

It carries out the reaction adenosine(37) in tRNA + dimethylallyl diphosphate = N(6)-dimethylallyladenosine(37) in tRNA + diphosphate. Functionally, catalyzes the transfer of a dimethylallyl group onto the adenine at position 37 in tRNAs that read codons beginning with uridine, leading to the formation of N6-(dimethylallyl)adenosine (i(6)A). The polypeptide is tRNA dimethylallyltransferase (Cytophaga hutchinsonii (strain ATCC 33406 / DSM 1761 / CIP 103989 / NBRC 15051 / NCIMB 9469 / D465)).